Here is a 161-residue protein sequence, read N- to C-terminus: MPSFDIVSKVDMQEIDNAVNQALKEILQRYDFKGTHNEIKLENEAIVLLGADDYKLDAVIDVLKGKLAKRNVSPKCLDFGKKEPASGTAVRQRVAIVQGISKEKGKEICKLIKNSKLKVQAQIMDDQVRVSGKKIDDLQSVIQLLKGQDVGIELQFINMRS.

Belongs to the YajQ family.

Its function is as follows. Nucleotide-binding protein. The polypeptide is Nucleotide-binding protein Pcar_0033 (Syntrophotalea carbinolica (strain DSM 2380 / NBRC 103641 / GraBd1) (Pelobacter carbinolicus)).